The primary structure comprises 235 residues: METPIIPSSSSLDRSGNSSNLLSVIPFQERTDSIIGCHFTLEIKAYHPDMMKSSEEGDVTLGSLYQGIHHIIRNKECQGLILGMDATHENKLHILALAFLCVIRKYEGKVSTYIERSKDTFSGVEQLLARIHIGDDHLGTYDPEVYQICGVEVPQGTYQLTLRTVLTPHNHTDGLSITLGIIVNSPARGMQGRSPMGVDVKRLILSFPKGTDPWTSYGEIKDKKGAVSKLKSILF.

It belongs to the nucleorhabdovirus type-2 matrix protein family. Homomultimer. Interacts with nucleoprotein and with the cytoplasmic domain of glycoprotein.

The protein localises to the virion membrane. Its subcellular location is the host endomembrane system. Plays a major role in assembly and budding of virion. Completely covers the ribonucleoprotein coil and keep it in condensed bullet-shaped form. Inhibits viral transcription and stimulates replication. This chain is Matrix protein (M), found in Colocasia esculenta (Wild taro).